A 242-amino-acid polypeptide reads, in one-letter code: Pyridoxine 5'-phosphate synthase (242 aa).

Asn-6 is a 3-amino-2-oxopropyl phosphate binding site. 8-9 provides a ligand contact to 1-deoxy-D-xylulose 5-phosphate; that stretch reads DH. Position 17 (Arg-17) interacts with 3-amino-2-oxopropyl phosphate. His-42 functions as the Proton acceptor in the catalytic mechanism. 2 residues coordinate 1-deoxy-D-xylulose 5-phosphate: Arg-44 and His-49. Glu-69 (proton acceptor) is an active-site residue. A 1-deoxy-D-xylulose 5-phosphate-binding site is contributed by Thr-99. The active-site Proton donor is the His-193. 3-amino-2-oxopropyl phosphate contacts are provided by residues Gly-194 and 217 to 218; that span reads GH.

It belongs to the PNP synthase family. In terms of assembly, homooctamer; tetramer of dimers.

The protein resides in the cytoplasm. The catalysed reaction is 3-amino-2-oxopropyl phosphate + 1-deoxy-D-xylulose 5-phosphate = pyridoxine 5'-phosphate + phosphate + 2 H2O + H(+). It functions in the pathway cofactor biosynthesis; pyridoxine 5'-phosphate biosynthesis; pyridoxine 5'-phosphate from D-erythrose 4-phosphate: step 5/5. Functionally, catalyzes the complicated ring closure reaction between the two acyclic compounds 1-deoxy-D-xylulose-5-phosphate (DXP) and 3-amino-2-oxopropyl phosphate (1-amino-acetone-3-phosphate or AAP) to form pyridoxine 5'-phosphate (PNP) and inorganic phosphate. The protein is Pyridoxine 5'-phosphate synthase of Aquifex aeolicus (strain VF5).